The sequence spans 256 residues: Undecaprenyl-diphosphatase (256 aa).

A run of 8 helical transmembrane segments spans residues Ile5–Ser25, Asn41–Phe61, Leu74–Ser94, Leu100–Tyr120, Leu135–Val155, Phe180–Gly200, Leu208–Leu228, and Phe234–Ile254.

The protein belongs to the UppP family.

It localises to the cell inner membrane. The enzyme catalyses di-trans,octa-cis-undecaprenyl diphosphate + H2O = di-trans,octa-cis-undecaprenyl phosphate + phosphate + H(+). Functionally, catalyzes the dephosphorylation of undecaprenyl diphosphate (UPP). Confers resistance to bacitracin. This chain is Undecaprenyl-diphosphatase, found in Pelagibacter ubique (strain HTCC1062).